The sequence spans 98 residues: NADH-ubiquinone oxidoreductase chain 4L (98 aa).

Helical transmembrane passes span 1 to 21 (MPVI…GLLI), 29 to 49 (SLLC…TLAL), and 61 to 81 (IILL…LVMV).

This sequence belongs to the complex I subunit 4L family. Core subunit of respiratory chain NADH dehydrogenase (Complex I) which is composed of 45 different subunits.

Its subcellular location is the mitochondrion inner membrane. It catalyses the reaction a ubiquinone + NADH + 5 H(+)(in) = a ubiquinol + NAD(+) + 4 H(+)(out). In terms of biological role, core subunit of the mitochondrial membrane respiratory chain NADH dehydrogenase (Complex I) which catalyzes electron transfer from NADH through the respiratory chain, using ubiquinone as an electron acceptor. Part of the enzyme membrane arm which is embedded in the lipid bilayer and involved in proton translocation. In Echinops telfairi (Lesser hedgehog tenrec), this protein is NADH-ubiquinone oxidoreductase chain 4L (MT-ND4L).